Here is a 122-residue protein sequence, read N- to C-terminus: Succinate dehydrogenase assembly factor 3, mitochondrial (122 aa).

A mitochondrion-targeting transit peptide spans 1 to 47 (MHPSVVRLVKPRRPERITSPILPPLPLYRAILRAHHRKLPQELRYLG).

It belongs to the complex I LYR family. SDHAF3 subfamily. In terms of assembly, interacts with the iron-sulfur protein subunit within the SDH catalytic dimer.

It localises to the mitochondrion matrix. Its function is as follows. Plays an essential role in the assembly of succinate dehydrogenase (SDH), an enzyme complex (also referred to as respiratory complex II) that is a component of both the tricarboxylic acid (TCA) cycle and the mitochondrial electron transport chain, and which couples the oxidation of succinate to fumarate with the reduction of ubiquinone (coenzyme Q) to ubiquinol. Promotes maturation of the iron-sulfur protein subunit of the SDH catalytic dimer, protecting it from the deleterious effects of oxidants. May act together with SDHAF1. The sequence is that of Succinate dehydrogenase assembly factor 3, mitochondrial from Candida albicans (strain SC5314 / ATCC MYA-2876) (Yeast).